We begin with the raw amino-acid sequence, 342 residues long: MRTKTLQSIQDMVEQLNRRQSMLGDYESTLEERLALVCNPPKRLQRMKIPRRKSEYSSHDRLKRARKIYLEVLENFPLIFVPFILVVPPNACRTWKASEVQRHLKDCEGIHLSYETRANFDGYCRTLRFGLESALTLNLVSCSRPTTITEADDAWAYNAADMDTAVKFFSEAIYKAIESSPKRLREKENQFVKSTQCIQMRFPRHNQQDAIVRLDVGFDSEVVKALFPTAWERLSSVHGFRSSSQSTNRNIEQLEPHLYDNACFTLQGATVSEIPTVLGPHVYRAIKESQLRQWETDNFLLKTTDCVSLDISRRQPYEGTLCLRVGFSLGVFMATQLYSFDR.

A Bipartite nuclear localization signal motif is present at residues 46–68 (RMKIPRRKSEYSSHDRLKRARKI). Residues 151–181 (ADDAWAYNAADMDTAVKFFSEAIYKAIESSP) form an RNA recognition motif (RRM)-like domain region.

It belongs to the hrmA family.

The protein localises to the nucleus. Its function is as follows. Probably modulates the generation of the hypoxia-typic morphotype (called H-MORPH) with altered biofilm architecture that leads to increased host inflammation, rapid disease progression, and mortality in a murine model of invasive aspergillosis. The chain is Hypoxia responsive morphology factor C from Aspergillus fumigatus (strain CBS 144.89 / FGSC A1163 / CEA10) (Neosartorya fumigata).